A 633-amino-acid chain; its full sequence is Putative oligopeptide transporter HI_0561 (633 aa).

15 helical membrane-spanning segments follow: residues 8–28 (GVTF…LKFF), 45–65 (SAGT…MGYW), 70–90 (FWQT…FTIP), 128–148 (IAYG…LRVM), 180–200 (IGIV…GVAV), 230–250 (IGVG…MKPM), 281–301 (MIYI…HFIA), 311–331 (ILLV…VAAA), 345–365 (PISG…VSIG), 379–399 (FLTA…CISN), 420–440 (VALI…LEIL), 483–503 (WTYI…DAFL), 515–535 (VIAV…VIVG), 564–584 (LFSA…AFII), and 604–624 (WDTI…VIFA).

It belongs to the oligopeptide OPT transporter family.

It localises to the cell membrane. This is Putative oligopeptide transporter HI_0561 from Haemophilus influenzae (strain ATCC 51907 / DSM 11121 / KW20 / Rd).